The chain runs to 174 residues: Guided entry of tail-anchored proteins factor 1 (174 aa).

The Lumenal portion of the chain corresponds to 1-8; it reads MSSAAADH. Residues 9–29 traverse the membrane as a helical segment; that stretch reads WAWLLVLSFVFGCNVLRILLP. Residues 30-99 are Cytoplasmic-facing; it reads SFSSFMSRVL…VKARTAQLAK (70 aa). Positions 39 to 94 form a coiled coil; sequence LQKDAEQESQMRAEIQDMKQELSTVNMMDEFARYARLERKINKMTDKLKTHVKART. An interaction with GET3/TRC40 region spans residues 39-97; the sequence is LQKDAEQESQMRAEIQDMKQELSTVNMMDEFARYARLERKINKMTDKLKTHVKARTAQL. A helical membrane pass occupies residues 100–120; it reads IKWVISVAFYVLQAALMISLI. The Lumenal portion of the chain corresponds to 121 to 148; the sequence is WKYYSVPVAVVPSKWITPLDRLVAFPTR. A helical transmembrane segment spans residues 149–169; that stretch reads VAGGVGITCWILVCNKVVAIV. Topologically, residues 170 to 174 are cytoplasmic; it reads LHPFS.

The protein belongs to the WRB/GET1 family. In terms of assembly, component of the Golgi to ER traffic (GET) complex, which is composed of GET1/WRB, CAMLG/GET2 and GET3/TRC40. Within the complex, GET1 and CAMLG form a heterotetramer which is stabilized by phosphatidylinositol binding and which binds to the GET3 homodimer. Interacts with CAMLG (via C-terminus). GET3 shows a higher affinity for CAMLG than for GET1.

The protein localises to the endoplasmic reticulum membrane. In terms of biological role, required for the post-translational delivery of tail-anchored (TA) proteins to the endoplasmic reticulum (ER). Together with CAMLG/GET2, acts as a membrane receptor for soluble GET3/TRC40, which recognizes and selectively binds the transmembrane domain of TA proteins in the cytosol. Required to ensure correct topology and ER insertion of CAMLG. In Homo sapiens (Human), this protein is Guided entry of tail-anchored proteins factor 1.